The following is a 617-amino-acid chain: E3 ubiquitin-protein ligase synoviolin (617 aa).

Topologically, residues 1–4 (MFRT) are cytoplasmic. The necessary and sufficient for SEL1L interaction stretch occupies residues 1–84 (MFRTAVMMAA…EHLLERSWYA (84 aa)). Residues 1 to 251 (MFRTAVMMAA…LFAIRPMYLA (251 aa)) are involved in FAM8A1 interaction. The helical transmembrane segment at 5 to 25 (AVMMAASLALTGAVVAHAYYL) threads the bilayer. The Lumenal portion of the chain corresponds to 26-41 (KHQFYPTVVYLTKSSP). A helical transmembrane segment spans residues 42-62 (SMAVLYIQAFVLVFLLGKVMG). Residues 63 to 98 (KVFFGQLRAAEMEHLLERSWYAVTETCLAFTVFRDD) lie on the Cytoplasmic side of the membrane. A helical membrane pass occupies residues 99–119 (FSPRFVALFTLLLFLKCFHWL). The Lumenal segment spans residues 120-140 (AEDRVDFMERSPNISWLFHCR). A helical membrane pass occupies residues 141–161 (IVSLMFLLGILDFLFVSHAYH). Residues 162-169 (SILTRGAS) lie on the Cytoplasmic side of the membrane. Residues 170-190 (VQLVFGFEYAILMTMVLTIFI) traverse the membrane as a helical segment. The Lumenal portion of the chain corresponds to 191-224 (KYVLHSVDLQSENPWDNKAVYMLYTELFTGFIKV). Residues 225–245 (LLYMAFMTIMIKVHTFPLFAI) traverse the membrane as a helical segment. The interval 236–270 (KVHTFPLFAIRPMYLAMRQFKKAVTDAIMSRRAIR) is interaction with p53/TP53. At 246–617 (RPMYLAMRQF…LQKLESPVAH (372 aa)) the chain is on the cytoplasmic side. Residues C291, C294, C307, H309, H312, C315, C326, and C329 each contribute to the Zn(2+) site. An RING-type; atypical zinc finger spans residues 291-330 (CIICREEMVTGAKRLPCNHIFHTSCLRSWFQRQQTCPTCR). Disordered regions lie at residues 337-375 (SLPA…GLLP), 393-453 (PVPP…PAPG), and 535-617 (RPAT…PVAH). A compositionally biased stretch (pro residues) spans 341–375 (QSPPPPEPADQGPPPAPHPPPLLPQPPNFPQGLLP). Residues 417–451 (PSGAATTTAAGTSATAASATASGPGSGSAPEAGPA) are compositionally biased toward low complexity. Residues 480-535 (GFAGLTPEELRALEGHERQHLEARLQSLRNIHTLLDAAMLQINQYLTVLASLGPPR) form an HAF-H domain; necessary to form higher-order Hrd1 complexes region. Positions 537-569 (ATSVNSTEETATTVVAAASSTSIPSSEATTPTP) are enriched in low complexity. Residues 591–600 (EMPEDGEPDA) are compositionally biased toward acidic residues. Position 613 is a phosphoserine (S613).

This sequence belongs to the HRD1 family. In terms of assembly, homodimer. Interacts with p53/TP53. Interacts with HTT. Component of the HRD1 complex, which comprises at least SYNV1/HRD1, DERL1/2, FAM8A1, HERPUD1/HERP, OS9, SEL1L and UBE2J1. FAM8A1 is stabilized by interaction with SYNV1, which prevents its proteasomal degradation. OS9 and UBE2J1 recruitment to the complex may be mediated by SEL1L. SYNV1 assembles with SEL1L and FAM8A1 through its transmembrane domains, but interaction with its cytoplasmic domain is required to confer stability to FAM8A1 and enhance recruitment of HERPUD1. The HRD1 complex also associates with VIMP and may transfer misfolded proteins from the endoplasmic reticulum to VCP. May form a complex with ERLEC1, HSPA5, OS9 and SEL1L. Interacts with VCP. Interacts with UBXN6. Interacts with BAG6. Interacts with NFE2L1. Interacts (via N-terminus) with components of the pre-B cell receptor, including IGLL1 and VPREB1. Interacts with CREB3L3; this interaction leads to CREB3L3 ubiquitination and proteasomal degradation. In terms of processing, not N-glycosylated. Post-translationally, auto-ubiquitinated. Deubiquitinated by USP19. In terms of tissue distribution, ubiquitously expressed, with highest levels in liver and kidney (at protein level). Up-regulated in synovial tissues from patients with rheumatoid arthritis (at protein level).

It is found in the endoplasmic reticulum membrane. It catalyses the reaction S-ubiquitinyl-[E2 ubiquitin-conjugating enzyme]-L-cysteine + [acceptor protein]-L-lysine = [E2 ubiquitin-conjugating enzyme]-L-cysteine + N(6)-ubiquitinyl-[acceptor protein]-L-lysine.. Its pathway is protein modification; protein ubiquitination. In terms of biological role, E3 ubiquitin-protein ligase which accepts ubiquitin specifically from endoplasmic reticulum-associated UBC7 E2 ligase and transfers it to substrates, promoting their degradation. Component of the endoplasmic reticulum quality control (ERQC) system also called ER-associated degradation (ERAD) involved in ubiquitin-dependent degradation of misfolded endoplasmic reticulum proteins. Also promotes the degradation of normal but naturally short-lived proteins such as SGK. Protects cells from ER stress-induced apoptosis. Protects neurons from apoptosis induced by polyglutamine-expanded huntingtin (HTT) or unfolded GPR37 by promoting their degradation. Sequesters p53/TP53 in the cytoplasm and promotes its degradation, thereby negatively regulating its biological function in transcription, cell cycle regulation and apoptosis. Mediates the ubiquitination and subsequent degradation of cytoplasmic NFE2L1. During the early stage of B cell development, required for degradation of the pre-B cell receptor (pre-BCR) complex, hence supporting further differentiation into mature B cells. In Homo sapiens (Human), this protein is E3 ubiquitin-protein ligase synoviolin.